Reading from the N-terminus, the 382-residue chain is GDP-mannose-dependent alpha-(1-6)-phosphatidylinositol monomannoside mannosyltransferase (382 aa).

GDP-alpha-D-mannose-binding residues include R200, K205, I257, and E294.

This sequence belongs to the glycosyltransferase group 1 family. Glycosyltransferase 4 subfamily.

The enzyme catalyses a 1,2-diacyl-sn-glycero-3-phospho-[alpha-D-mannopyranosyl-(1&lt;-&gt;6)-D-myo-inositol] + GDP-alpha-D-mannose = a 2,6-O-bis(alpha-D-mannopyranosyl)-1-phosphatidyl-1D-myo-inositol + GDP + H(+). The catalysed reaction is a 1,2-diacyl-sn-glycero-3-phospho-[alpha-D-6-acyl-mannopyranosyl-(1&lt;-&gt;6)-D-myo-inositol] + GDP-alpha-D-mannose = a 2-O-(alpha-D-mannosyl)-6-O-(6-O-acyl-alpha-D-mannosyl)-1-phosphatidyl-1D-myo-inositol + GDP + H(+). It participates in phospholipid metabolism; phosphatidylinositol metabolism. Functionally, involved in the biosynthesis of phosphatidyl-myo-inositol mannosides (PIM) which are early precursors in the biosynthesis of lipomannans (LM) and lipoarabinomannans (LAM). Catalyzes the addition of a mannosyl residue from GDP-D-mannose (GDP-Man) to the position 6 of a phosphatidyl-myo-inositol bearing an alpha-1,2-linked mannose residue (PIM1) to generate phosphatidyl-myo-inositol bearing alpha-1,2- and alpha-1,6-linked mannose residues (Ac1PIM2). PimB also catalyzes the addition of a mannosyl residue from GDP-Man to the position 6 of phosphatidyl-myo-inositol bearing an acylated alpha-1,2-linked mannose residue (Ac1PIM1) to generate monoacylated phosphatidyl-myo-inositol bearing alpha-1,2- and alpha-1,6-linked mannose residues (Ac1PIM2). The addition of the second mannosyl residue by PimB preferentially occurs before the acylation of the mannosyl residue transferred by PimA. Also able to transfer a mannosyl residue from GDP-Man to the position 6 of a phosphatidyl-myo-inositol (PI), but this reaction is very slow. This Mycolicibacterium smegmatis (strain ATCC 700084 / mc(2)155) (Mycobacterium smegmatis) protein is GDP-mannose-dependent alpha-(1-6)-phosphatidylinositol monomannoside mannosyltransferase.